Here is a 446-residue protein sequence, read N- to C-terminus: Phosphoglucosamine mutase (446 aa).

The active-site Phosphoserine intermediate is the serine 103. Serine 103, aspartate 242, aspartate 244, and aspartate 246 together coordinate Mg(2+). Serine 103 bears the Phosphoserine mark.

The protein belongs to the phosphohexose mutase family. The cofactor is Mg(2+). Post-translationally, activated by phosphorylation.

It carries out the reaction alpha-D-glucosamine 1-phosphate = D-glucosamine 6-phosphate. Its function is as follows. Catalyzes the conversion of glucosamine-6-phosphate to glucosamine-1-phosphate. The protein is Phosphoglucosamine mutase of Vibrio cholerae serotype O1 (strain ATCC 39315 / El Tor Inaba N16961).